The primary structure comprises 443 residues: MTHIQLDFSKTLEFFGEHELKQQQEIVKSIHKTIHEGTGAGSDFLGWVDLPVDYDKEEFSRIVEASKRIKENSDVLVVIGIGGSYLGARAAIEMLTSSFRNSNEYPEIVFVGNHLSSTYTKELVDYLADKDFSVNVISKSGTTTEPAVAFRLFKQLVEERYGKEEAQKRIFATTDKEKGALKQLATNEGYETFIVPDDVGGRYSVLTAVGLLPIATAGINIEAMMIGAAKAREELSSDKLEENIAYQYATIRNILYAKGYTTEMLINYEPSMQYFNEWWKQLFGESEGKDFKGIYPSSANYTTDLHSLGQYVQEGRRFLFETVVKVNHPKYDITIEKDSDDLDGLNYLAGKTIDEVNTKAFEGTLLAHTDGGVPNMVVNIPQLDEETFGYVVYFFELACAMSGYQLGVNPFNQPGVEAYKQNMFALLGKPGFEDLKKELEERL.

Glutamate 285 (proton donor) is an active-site residue. Active-site residues include histidine 306 and lysine 420.

This sequence belongs to the GPI family.

Its subcellular location is the cytoplasm. The enzyme catalyses alpha-D-glucose 6-phosphate = beta-D-fructose 6-phosphate. It functions in the pathway carbohydrate biosynthesis; gluconeogenesis. Its pathway is carbohydrate degradation; glycolysis; D-glyceraldehyde 3-phosphate and glycerone phosphate from D-glucose: step 2/4. Its function is as follows. Catalyzes the reversible isomerization of glucose-6-phosphate to fructose-6-phosphate. The sequence is that of Glucose-6-phosphate isomerase from Staphylococcus aureus (strain USA300).